Here is a 488-residue protein sequence, read N- to C-terminus: Transmembrane protein 39A-B (488 aa).

Residues N31 and N39 are each glycosylated (N-linked (GlcNAc...) asparagine). 3 consecutive transmembrane segments (helical) span residues 72-92, 110-130, and 155-175; these read GLVF…TQYI, TSLN…VMLA, and LIIG…WTTV. Residue N180 is glycosylated (N-linked (GlcNAc...) asparagine). Residues 182–202 traverse the membrane as a helical segment; that stretch reads SVLNLLFLGYPFGVYVPLCCF. N-linked (GlcNAc...) asparagine glycosylation is present at N206. 4 consecutive transmembrane segments (helical) span residues 287–307, 319–339, 420–440, and 446–466; these read EVLF…LCFV, CEHL…QLLP, LLNL…YSLL, and NHTL…FKLL.

It belongs to the TMEM39 family.

Its subcellular location is the membrane. The protein is Transmembrane protein 39A-B (tmem39a-b) of Xenopus laevis (African clawed frog).